Consider the following 311-residue polypeptide: Aspartate carbamoyltransferase catalytic subunit (311 aa).

Arg55 and Thr56 together coordinate carbamoyl phosphate. L-aspartate is bound at residue Lys85. Carbamoyl phosphate is bound by residues Arg106, His135, and Gln138. Arg168 and Arg230 together coordinate L-aspartate. 2 residues coordinate carbamoyl phosphate: Leu268 and Pro269.

Belongs to the aspartate/ornithine carbamoyltransferase superfamily. ATCase family. Heterododecamer (2C3:3R2) of six catalytic PyrB chains organized as two trimers (C3), and six regulatory PyrI chains organized as three dimers (R2).

It carries out the reaction carbamoyl phosphate + L-aspartate = N-carbamoyl-L-aspartate + phosphate + H(+). The protein operates within pyrimidine metabolism; UMP biosynthesis via de novo pathway; (S)-dihydroorotate from bicarbonate: step 2/3. Its function is as follows. Catalyzes the condensation of carbamoyl phosphate and aspartate to form carbamoyl aspartate and inorganic phosphate, the committed step in the de novo pyrimidine nucleotide biosynthesis pathway. The polypeptide is Aspartate carbamoyltransferase catalytic subunit (Pectobacterium carotovorum subsp. carotovorum (strain PC1)).